The chain runs to 477 residues: Bifunctional protein HldE (477 aa).

The segment at 1-321 is ribokinase; that stretch reads MKILKSFTPR…EYEASLHKST (321 aa). Residue 198-201 coordinates ATP; it reads NKKE. Aspartate 266 is a catalytic residue. The tract at residues 348–477 is cytidylyltransferase; sequence FTNGCFDILH…IQKIKGDLHV (130 aa).

In the N-terminal section; belongs to the carbohydrate kinase PfkB family. It in the C-terminal section; belongs to the cytidylyltransferase family. As to quaternary structure, homodimer.

The catalysed reaction is D-glycero-beta-D-manno-heptose 7-phosphate + ATP = D-glycero-beta-D-manno-heptose 1,7-bisphosphate + ADP + H(+). The enzyme catalyses D-glycero-beta-D-manno-heptose 1-phosphate + ATP + H(+) = ADP-D-glycero-beta-D-manno-heptose + diphosphate. The protein operates within nucleotide-sugar biosynthesis; ADP-L-glycero-beta-D-manno-heptose biosynthesis; ADP-L-glycero-beta-D-manno-heptose from D-glycero-beta-D-manno-heptose 7-phosphate: step 1/4. Its pathway is nucleotide-sugar biosynthesis; ADP-L-glycero-beta-D-manno-heptose biosynthesis; ADP-L-glycero-beta-D-manno-heptose from D-glycero-beta-D-manno-heptose 7-phosphate: step 3/4. Functionally, catalyzes the phosphorylation of D-glycero-D-manno-heptose 7-phosphate at the C-1 position to selectively form D-glycero-beta-D-manno-heptose-1,7-bisphosphate. In terms of biological role, catalyzes the ADP transfer from ATP to D-glycero-beta-D-manno-heptose 1-phosphate, yielding ADP-D-glycero-beta-D-manno-heptose. The polypeptide is Bifunctional protein HldE (Sulfurimonas denitrificans (strain ATCC 33889 / DSM 1251) (Thiomicrospira denitrificans (strain ATCC 33889 / DSM 1251))).